The primary structure comprises 96 residues: UPF0235 protein VC0395_A0010/VC395_0502 (96 aa).

The protein belongs to the UPF0235 family.

In Vibrio cholerae serotype O1 (strain ATCC 39541 / Classical Ogawa 395 / O395), this protein is UPF0235 protein VC0395_A0010/VC395_0502.